The following is a 200-amino-acid chain: COMM domain-containing protein 7 (200 aa).

The 68-residue stretch at 133-200 (QLIDMEWKFG…RVRTSMECFC (68 aa)) folds into the COMM domain.

It belongs to the COMM domain-containing protein 7 family. Component of the commander complex consisting of the CCC subcomplex and the retriever subcomplex. Component of the CCC (COMMD/CCDC22/CCDC93) subcomplex consisting of COMMD1, COMMD2, COMMD3, COMMD4, COMMD5, COMMD6, COMMD7, COMMD8, COMMD9, COMMD10, CCDC22 and CCDC93; within the complex forms a heterodimer with COMMD9. Interacts with RELA. Interacts with CCDC22, CCDC93, SCNN1B, CUL7. Widely expressed with highest expression in lung.

The protein localises to the cytoplasmic vesicle. Scaffold protein in the commander complex that is essential for endosomal recycling of transmembrane cargos; the commander complex is composed of the CCC subcomplex and the retriever subcomplex. May modulate activity of cullin-RING E3 ubiquitin ligase (CRL) complexes. Associates with the NF-kappa-B complex and suppresses its transcriptional activity. This chain is COMM domain-containing protein 7 (COMMD7), found in Homo sapiens (Human).